The primary structure comprises 122 residues: Large ribosomal subunit protein uL29B (122 aa).

The stretch at 10–69 forms a coiled coil; it reads QLGIKQIEERAAEIKAELAALRQKKNSGDVGANDIKTAKKNLARALTVRREKILEELVEA.

Belongs to the universal ribosomal protein uL29 family. Component of the large ribosomal subunit.

The protein resides in the cytoplasm. The polypeptide is Large ribosomal subunit protein uL29B (RPL35C) (Encephalitozoon cuniculi (strain GB-M1) (Microsporidian parasite)).